The sequence spans 118 residues: Beta-2-microglobulin (118 aa).

A signal peptide spans 1-20; it reads MARVVALVLLGLLSLTGLEA. Residues 22 to 115 form the Ig-like C1-type domain; it reads PRVPKVQVYS…LKDPLIVKWD (94 aa). An intrachain disulfide couples cysteine 45 to cysteine 99.

It belongs to the beta-2-microglobulin family. In terms of assembly, heterodimer of an alpha chain and a beta chain. Beta-2-microglobulin is the beta-chain of major histocompatibility complex class I molecules.

It localises to the secreted. Its function is as follows. Component of the class I major histocompatibility complex (MHC). Involved in the presentation of peptide antigens to the immune system. The sequence is that of Beta-2-microglobulin (B2M) from Equus caballus (Horse).